The primary structure comprises 348 residues: Putative 4-hydroxythreonine-4-phosphate dehydrogenase 2 (348 aa).

His180, His224, and His279 together coordinate a divalent metal cation.

This sequence belongs to the PdxA family. As to quaternary structure, homodimer. Zn(2+) serves as cofactor. Requires Mg(2+) as cofactor. Co(2+) is required as a cofactor.

The protein localises to the cytoplasm. The enzyme catalyses 4-(phosphooxy)-L-threonine + NAD(+) = 3-amino-2-oxopropyl phosphate + CO2 + NADH. It participates in cofactor biosynthesis; pyridoxine 5'-phosphate biosynthesis; pyridoxine 5'-phosphate from D-erythrose 4-phosphate: step 4/5. Its function is as follows. Catalyzes the NAD(P)-dependent oxidation of 4-(phosphooxy)-L-threonine (HTP) into 2-amino-3-oxo-4-(phosphooxy)butyric acid which spontaneously decarboxylates to form 3-amino-2-oxopropyl phosphate (AHAP). This is Putative 4-hydroxythreonine-4-phosphate dehydrogenase 2 from Rhizobium meliloti (strain 1021) (Ensifer meliloti).